The chain runs to 306 residues: uncharacterized protein (306 aa).

The active-site Proton donor is the Tyr51. Residue Gly197–Lys207 participates in NADP(+) binding.

This sequence belongs to the aldo/keto reductase family. Aldo/keto reductase 2 subfamily.

This is an uncharacterized protein from Bacillus subtilis (strain 168).